We begin with the raw amino-acid sequence, 161 residues long: UPF0178 protein BOV_1904 (161 aa).

This sequence belongs to the UPF0178 family.

The protein is UPF0178 protein BOV_1904 of Brucella ovis (strain ATCC 25840 / 63/290 / NCTC 10512).